We begin with the raw amino-acid sequence, 396 residues long: Elongation factor Tu (396 aa).

Residues 10-206 (KPHVNIGTIG…AVDESVPDPI (197 aa)) form the tr-type G domain. Residues 19–26 (GHVDHGKT) are G1. Residue 19–26 (GHVDHGKT) participates in GTP binding. Residue T26 participates in Mg(2+) binding. Residues 62–66 (GITIN) are G2. The tract at residues 83–86 (DAPG) is G3. Residues 83-87 (DAPGH) and 138-141 (NKSD) contribute to the GTP site. Positions 138 to 141 (NKSD) are G4. Positions 176-178 (SGL) are G5.

This sequence belongs to the TRAFAC class translation factor GTPase superfamily. Classic translation factor GTPase family. EF-Tu/EF-1A subfamily. In terms of assembly, monomer.

Its subcellular location is the cytoplasm. It carries out the reaction GTP + H2O = GDP + phosphate + H(+). GTP hydrolase that promotes the GTP-dependent binding of aminoacyl-tRNA to the A-site of ribosomes during protein biosynthesis. This Renibacterium salmoninarum (strain ATCC 33209 / DSM 20767 / JCM 11484 / NBRC 15589 / NCIMB 2235) protein is Elongation factor Tu.